Consider the following 130-residue polypeptide: Holo-[acyl-carrier-protein] synthase (130 aa).

Residues aspartate 9 and glutamate 58 each contribute to the Mg(2+) site.

This sequence belongs to the P-Pant transferase superfamily. AcpS family. Mg(2+) is required as a cofactor.

It is found in the cytoplasm. The catalysed reaction is apo-[ACP] + CoA = holo-[ACP] + adenosine 3',5'-bisphosphate + H(+). In terms of biological role, transfers the 4'-phosphopantetheine moiety from coenzyme A to a Ser of acyl-carrier-protein. The protein is Holo-[acyl-carrier-protein] synthase of Mycobacterium tuberculosis (strain CDC 1551 / Oshkosh).